Consider the following 134-residue polypeptide: Putative pre-16S rRNA nuclease (134 aa).

Belongs to the YqgF nuclease family.

It localises to the cytoplasm. Functionally, could be a nuclease involved in processing of the 5'-end of pre-16S rRNA. The protein is Putative pre-16S rRNA nuclease of Helicobacter pylori (strain P12).